We begin with the raw amino-acid sequence, 383 residues long: Putative glutamate--cysteine ligase 2-1 (383 aa).

It belongs to the glutamate--cysteine ligase type 2 family. YbdK subfamily.

It catalyses the reaction L-cysteine + L-glutamate + ATP = gamma-L-glutamyl-L-cysteine + ADP + phosphate + H(+). ATP-dependent carboxylate-amine ligase which exhibits weak glutamate--cysteine ligase activity. The chain is Putative glutamate--cysteine ligase 2-1 from Nocardia farcinica (strain IFM 10152).